The chain runs to 278 residues: F-box only protein 17 (278 aa).

One can recognise an F-box domain in the interval 15-62 (SLALDALPPELLVQVLSHVPPRSLVTRCRPVCRAWRDIVDGPTVWLLQ). In terms of domain architecture, FBA spans 99–275 (YCLRAPFGRN…VTHSSVRVRI (177 aa)).

In terms of assembly, part of a SCF (SKP1-cullin-F-box) protein ligase complex. Interacts with SKP1 and CUL1. As to expression, expressed in heart, skeletal muscle, liver and kidney. Expressed at lower levels in spleen and brain.

In terms of biological role, substrate-recognition component of the SCF (SKP1-CUL1-F-box protein)-type E3 ubiquitin ligase complex. Able to recognize and bind denatured glycoproteins, which are modified with complex-type oligosaccharides. Also recognizes sulfated glycans. Does not bind high-mannose glycoproteins. This chain is F-box only protein 17 (FBXO17), found in Homo sapiens (Human).